The primary structure comprises 196 residues: dITP/XTP pyrophosphatase (196 aa).

10-15 (TSNKGK) contacts substrate. Catalysis depends on D71, which acts as the Proton acceptor. D71 provides a ligand contact to Mg(2+). Substrate is bound by residues S72, 156-159 (FGYD), K179, and 184-185 (HR).

Belongs to the HAM1 NTPase family. In terms of assembly, homodimer. Mg(2+) serves as cofactor.

The enzyme catalyses XTP + H2O = XMP + diphosphate + H(+). The catalysed reaction is dITP + H2O = dIMP + diphosphate + H(+). It catalyses the reaction ITP + H2O = IMP + diphosphate + H(+). Functionally, pyrophosphatase that catalyzes the hydrolysis of nucleoside triphosphates to their monophosphate derivatives, with a high preference for the non-canonical purine nucleotides XTP (xanthosine triphosphate), dITP (deoxyinosine triphosphate) and ITP. Seems to function as a house-cleaning enzyme that removes non-canonical purine nucleotides from the nucleotide pool, thus preventing their incorporation into DNA/RNA and avoiding chromosomal lesions. This chain is dITP/XTP pyrophosphatase, found in Haemophilus ducreyi (strain 35000HP / ATCC 700724).